Consider the following 199-residue polypeptide: Fe/S biogenesis protein NfuA (199 aa).

2 residues coordinate [4Fe-4S] cluster: C151 and C154.

The protein belongs to the NfuA family. Homodimer. The cofactor is [4Fe-4S] cluster.

Involved in iron-sulfur cluster biogenesis. Binds a 4Fe-4S cluster, can transfer this cluster to apoproteins, and thereby intervenes in the maturation of Fe/S proteins. Could also act as a scaffold/chaperone for damaged Fe/S proteins. This is Fe/S biogenesis protein NfuA from Xylella fastidiosa (strain M23).